A 148-amino-acid chain; its full sequence is 3-hydroxyacyl-[acyl-carrier-protein] dehydratase FabZ (148 aa).

Histidine 48 is an active-site residue.

This sequence belongs to the thioester dehydratase family. FabZ subfamily.

It is found in the cytoplasm. It carries out the reaction a (3R)-hydroxyacyl-[ACP] = a (2E)-enoyl-[ACP] + H2O. Its function is as follows. Involved in unsaturated fatty acids biosynthesis. Catalyzes the dehydration of short chain beta-hydroxyacyl-ACPs and long chain saturated and unsaturated beta-hydroxyacyl-ACPs. This Acinetobacter baylyi (strain ATCC 33305 / BD413 / ADP1) protein is 3-hydroxyacyl-[acyl-carrier-protein] dehydratase FabZ.